Here is a 224-residue protein sequence, read N- to C-terminus: Protein DEHYDRATION-INDUCED 19 homolog 4 (224 aa).

Residues 1–12 (MDSNWINCPSVF) show a composition bias toward polar residues. The interval 1 to 23 (MDSNWINCPSVFSSSSSSSRRCQ) is disordered. Residues 13–23 (SSSSSSSRRCQ) show a composition bias toward low complexity. Phosphothreonine is present on T117.

Belongs to the Di19 family. Post-translationally, phosphorylated in vitro by CPK3 or CPK11. As to expression, expressed in seedlings, roots, leaves, stems, flowers and siliques.

It localises to the cytoplasm. The protein resides in the perinuclear region. The protein is Protein DEHYDRATION-INDUCED 19 homolog 4 (DI19-4) of Arabidopsis thaliana (Mouse-ear cress).